The chain runs to 388 residues: Succinate--CoA ligase [ADP-forming] subunit beta (388 aa).

The region spanning 9–244 (KQLFAEYGLP…PSQDDPREAH (236 aa)) is the ATP-grasp domain. ATP is bound by residues Lys46, 53–55 (GRG), Glu99, Thr102, and Glu107. Residues Asn199 and Asp213 each coordinate Mg(2+). Residues Asn264 and 321 to 323 (GIV) contribute to the substrate site.

Belongs to the succinate/malate CoA ligase beta subunit family. In terms of assembly, heterotetramer of two alpha and two beta subunits. Mg(2+) is required as a cofactor.

The catalysed reaction is succinate + ATP + CoA = succinyl-CoA + ADP + phosphate. It carries out the reaction GTP + succinate + CoA = succinyl-CoA + GDP + phosphate. It functions in the pathway carbohydrate metabolism; tricarboxylic acid cycle; succinate from succinyl-CoA (ligase route): step 1/1. Succinyl-CoA synthetase functions in the citric acid cycle (TCA), coupling the hydrolysis of succinyl-CoA to the synthesis of either ATP or GTP and thus represents the only step of substrate-level phosphorylation in the TCA. The beta subunit provides nucleotide specificity of the enzyme and binds the substrate succinate, while the binding sites for coenzyme A and phosphate are found in the alpha subunit. The polypeptide is Succinate--CoA ligase [ADP-forming] subunit beta (Pseudomonas fluorescens (strain Pf0-1)).